Consider the following 73-residue polypeptide: Mu-conotoxin SIIIA (73 aa).

The signal sequence occupies residues 1–20 (MMSKLGVLLTVCPLLFPLTA). The segment at 20 to 40 (ALPPDGDQPADRPAERMQDDI) is disordered. The propeptide occupies 21-49 (LPPDGDQPADRPAERMQDDISSDEHPLFD). Over residues 28–40 (PADRPAERMQDDI) the composition is skewed to basic and acidic residues. Glutamine 52 is modified (pyrrolidone carboxylic acid). 3 cysteine pairs are disulfide-bonded: cysteine 54–cysteine 64, cysteine 55–cysteine 70, and cysteine 59–cysteine 71. Cysteine 71 is modified (cysteine amide).

This sequence belongs to the conotoxin M superfamily. Expressed by the venom duct.

It localises to the secreted. Mu-conotoxins block voltage-gated sodium channels (Nav). This toxin moderately blocks rNav1.1/SCN1A, rNav1.2/SCN2A, rNav1.3/SCN3A, rNav1.4/SCN4A, and mNav1.6/SCN8A. This Conus striatus (Striated cone) protein is Mu-conotoxin SIIIA.